We begin with the raw amino-acid sequence, 218 residues long: Ribose-5-phosphate isomerase A (218 aa).

Substrate is bound by residues Thr28 to Thr31, Asp81 to Asp84, and Lys94 to Gly97. The Proton acceptor role is filled by Glu103. Substrate is bound at residue Lys121.

This sequence belongs to the ribose 5-phosphate isomerase family. In terms of assembly, homodimer.

The enzyme catalyses aldehydo-D-ribose 5-phosphate = D-ribulose 5-phosphate. It participates in carbohydrate degradation; pentose phosphate pathway; D-ribose 5-phosphate from D-ribulose 5-phosphate (non-oxidative stage): step 1/1. Its function is as follows. Catalyzes the reversible conversion of ribose-5-phosphate to ribulose 5-phosphate. This chain is Ribose-5-phosphate isomerase A, found in Shewanella sediminis (strain HAW-EB3).